Consider the following 79-residue polypeptide: Small ribosomal subunit protein bS18 (79 aa).

Belongs to the bacterial ribosomal protein bS18 family. As to quaternary structure, part of the 30S ribosomal subunit. Forms a tight heterodimer with protein bS6.

In terms of biological role, binds as a heterodimer with protein bS6 to the central domain of the 16S rRNA, where it helps stabilize the platform of the 30S subunit. The sequence is that of Small ribosomal subunit protein bS18 from Streptococcus pyogenes serotype M5 (strain Manfredo).